The chain runs to 276 residues: Formamidopyrimidine-DNA glycosylase (276 aa).

Proline 2 (schiff-base intermediate with DNA) is an active-site residue. Glutamate 3 acts as the Proton donor in catalysis. Lysine 60 functions as the Proton donor; for beta-elimination activity in the catalytic mechanism. 2 residues coordinate DNA: histidine 93 and arginine 112. The FPG-type zinc finger occupies 240–274 (NVYGKKGEPCVTCGTILEKTVVGGRGTHYCPICQP). Arginine 264 functions as the Proton donor; for delta-elimination activity in the catalytic mechanism.

It belongs to the FPG family. As to quaternary structure, monomer. The cofactor is Zn(2+).

It catalyses the reaction Hydrolysis of DNA containing ring-opened 7-methylguanine residues, releasing 2,6-diamino-4-hydroxy-5-(N-methyl)formamidopyrimidine.. The enzyme catalyses 2'-deoxyribonucleotide-(2'-deoxyribose 5'-phosphate)-2'-deoxyribonucleotide-DNA = a 3'-end 2'-deoxyribonucleotide-(2,3-dehydro-2,3-deoxyribose 5'-phosphate)-DNA + a 5'-end 5'-phospho-2'-deoxyribonucleoside-DNA + H(+). Its function is as follows. Involved in base excision repair of DNA damaged by oxidation or by mutagenic agents. Acts as a DNA glycosylase that recognizes and removes damaged bases. Has a preference for oxidized purines, such as 7,8-dihydro-8-oxoguanine (8-oxoG). Has AP (apurinic/apyrimidinic) lyase activity and introduces nicks in the DNA strand. Cleaves the DNA backbone by beta-delta elimination to generate a single-strand break at the site of the removed base with both 3'- and 5'-phosphates. The polypeptide is Formamidopyrimidine-DNA glycosylase (Bacillus anthracis).